A 20-amino-acid chain; its full sequence is Protease inhibitor (20 aa).

Monomer. In terms of processing, glycosylated. Stored in epidermis and secreted into the hemolymph and cuticle. Not detected in the interior of the epidermis, fat body cells or columnar or goblet cells of the midgut epithelium (at protein level).

Functionally, inhibits trypsin and chymotrypsin. This is Protease inhibitor from Antheraea mylitta (Tasar silkworm).